The following is a 277-amino-acid chain: Large ribosomal subunit protein uL2 (277 aa).

The interval 222 to 277 (GSVMNPNDHPHGGGEGKSPVGHPGPLTPWGKPALGLKTRKNKKYSDKFIIKRKNKK) is disordered.

Belongs to the universal ribosomal protein uL2 family. In terms of assembly, part of the 50S ribosomal subunit. Forms a bridge to the 30S subunit in the 70S ribosome.

Functionally, one of the primary rRNA binding proteins. Required for association of the 30S and 50S subunits to form the 70S ribosome, for tRNA binding and peptide bond formation. It has been suggested to have peptidyltransferase activity; this is somewhat controversial. Makes several contacts with the 16S rRNA in the 70S ribosome. The sequence is that of Large ribosomal subunit protein uL2 from Clostridium kluyveri (strain NBRC 12016).